We begin with the raw amino-acid sequence, 335 residues long: MTSFCSMISLLLLLSLSSAVFSDDASFQKLPVPETRSGPEAFAFDSTGKGFYTGVSGGKILKYLPETGYVDFAQITESSNSSWCDGTIGTALAGRCGRPAGIAFNEKTGDLYVADAPLGLHVISPAGGLATKITDSVDGKPFKFLDGLDVDPTTGVVYFTSFSSRFSPIQVLIALGLKDATGKLYKYDPSTKVVTVLMEGLSGSAGCAVSSDGSFVLVSQFTKSNIKRYWIKGPKAGSSEDFTNSVSNPDNIKRIGSTGNFWVASVVNKIIVPTNPSAVKVNSNGEVLQTIPLKDKFGDTLLSEVNEFEGNLYIGTLTGPFAGILKLEKGSCPAT.

The first 22 residues, 1–22, serve as a signal peptide directing secretion; that stretch reads MTSFCSMISLLLLLSLSSAVFS. N-linked (GlcNAc...) asparagine glycosylation occurs at N80.

This sequence belongs to the strictosidine synthase family.

The protein localises to the vacuole. It carries out the reaction 3alpha(S)-strictosidine + H2O = secologanin + tryptamine. The protein operates within alkaloid biosynthesis; 3alpha(S)-strictosidine biosynthesis; 3alpha(S)-strictosidine from secologanin and tryptamine: step 1/1. In terms of biological role, catalyzes the stereospecific condensation of tryptamine with secologanin to form strictosidine, the key intermediate of indole alkaloid biosynthesis. The sequence is that of Protein STRICTOSIDINE SYNTHASE-LIKE 12 from Arabidopsis thaliana (Mouse-ear cress).